Reading from the N-terminus, the 221-residue chain is Large ribosomal subunit protein bL25 (221 aa).

The segment at 192–221 (APRVEKEETEEDTVAPGDVPAENSKDADEE) is disordered.

It belongs to the bacterial ribosomal protein bL25 family. CTC subfamily. As to quaternary structure, part of the 50S ribosomal subunit; part of the 5S rRNA/L5/L18/L25 subcomplex. Contacts the 5S rRNA. Binds to the 5S rRNA independently of L5 and L18.

This is one of the proteins that binds to the 5S RNA in the ribosome where it forms part of the central protuberance. This Idiomarina loihiensis (strain ATCC BAA-735 / DSM 15497 / L2-TR) protein is Large ribosomal subunit protein bL25.